A 416-amino-acid polypeptide reads, in one-letter code: UV excision repair protein RAD23 homolog B (416 aa).

The 79-residue stretch at 1–79 folds into the Ubiquitin-like domain; sequence MQVTLKTLQQ…VVVMVTKPKA (79 aa). A compositionally biased stretch (low complexity) spans 83-111; it reads AVPATTQPSSTPSPTAVSSSPAVAAAQAP. The disordered stretch occupies residues 83 to 175; it reads AVPATTQPSS…STPGDSSRSN (93 aa). Over residues 112-121 the composition is skewed to pro residues; the sequence is APTPALPPTS. The span at 122–143 shows a compositional bias: low complexity; the sequence is TPASTAPASTTASSEPAPAGAT. T155 carries the post-translational modification Phosphothreonine. Phosphoserine occurs at positions 160 and 174. The residue at position 186 (T186) is a Phosphothreonine. A UBA 1 domain is found at 188 to 228; it reads QSYENMVTEIMSMGYEREQVIAALRASFNNPDRAVEYLLMG. Position 199 is a phosphoserine (S199). Y202 bears the Phosphotyrosine mark. Residues 274 to 317 form the STI1 domain; the sequence is HPLEFLRNQPQFQQMRQIIQQNPSLLPALLQQIGRENPQLLQQI. Residues 333-356 are disordered; that stretch reads QEAGSQGGGGGGGGGGGGGGGGGI. Gly residues predominate over residues 337–356; the sequence is SQGGGGGGGGGGGGGGGGGI. One can recognise a UBA 2 domain in the interval 371–411; the sequence is PQEKEAIERLKALGFPEGLVIQAYFACEKNENLAANFLLQQ.

Belongs to the RAD23 family. Component of the XPC complex composed of XPC, RAD23B and CETN2. Interacts with NGLY1 and PSMC1. Interacts with ATXN3. Interacts with AMFR. Interacts with VCP; the interaction is indirect and mediated by NGLY1.

It is found in the nucleus. Its subcellular location is the cytoplasm. In terms of biological role, multiubiquitin chain receptor involved in modulation of proteasomal degradation. Binds to polyubiquitin chains. Proposed to be capable to bind simultaneously to the 26S proteasome and to polyubiquitinated substrates and to deliver ubiquitinated proteins to the proteasome. May play a role in endoplasmic reticulum-associated degradation (ERAD) of misfolded glycoproteins by association with PNGase and delivering deglycosylated proteins to the proteasome. Its function is as follows. Involved in global genome nucleotide excision repair (GG-NER) by acting as component of the XPC complex. Cooperatively with Cetn2 appears to stabilize Xpc. May protect Xpc from proteasomal degradation. Functionally, the XPC complex is proposed to represent the first factor bound at the sites of DNA damage and together with other core recognition factors, Xpa, RPA and the TFIIH complex, is part of the pre-incision (or initial recognition) complex. The XPC complex recognizes a wide spectrum of damaged DNA characterized by distortions of the DNA helix such as single-stranded loops, mismatched bubbles or single-stranded overhangs. The orientation of XPC complex binding appears to be crucial for inducing a productive NER. XPC complex is proposed to recognize and to interact with unpaired bases on the undamaged DNA strand which is followed by recruitment of the TFIIH complex and subsequent scanning for lesions in the opposite strand in a 5'-to-3' direction by the NER machinery. Cyclobutane pyrimidine dimers (CPDs) which are formed upon UV-induced DNA damage esacpe detection by the XPC complex due to a low degree of structural perurbation. Instead they are detected by the UV-DDB complex which in turn recruits and cooperates with the XPC complex in the respective DNA repair. In vitro, the Xpc:Rad23b dimer is sufficient to initiate NER; it preferentially binds to cisplatin and UV-damaged double-stranded DNA and also binds to a variety of chemically and structurally diverse DNA adducts. Xpc:Rad23b contacts DNA both 5' and 3' of a cisplatin lesion with a preference for the 5' side. Xpc:Rad23bB induces a bend in DNA upon binding. Xpc:Rad23b stimulates the activity of DNA glycosylases Tdg and Smug1. The chain is UV excision repair protein RAD23 homolog B (Rad23b) from Mus musculus (Mouse).